A 495-amino-acid chain; its full sequence is Cytochrome P450 94C1 (495 aa).

The helical transmembrane segment at 2–22 (LLIISFTIVSFFFIIIFSLFH) threads the bilayer. Cys439 is a heme binding site.

This sequence belongs to the cytochrome P450 family. The cofactor is heme.

The protein localises to the membrane. It is found in the endoplasmic reticulum membrane. The enzyme catalyses a 12-hydroxyjasmonyl-L-alpha-amino acid + 2 reduced [NADPH--hemoprotein reductase] + 2 O2 = a 12-hydroxy-12-oxojasmonyl-L-alpha-amino acid + 2 oxidized [NADPH--hemoprotein reductase] + 3 H2O + 3 H(+). Functionally, involved in the oxidation of the plant hormone jasmonoyl-L-isoleucine (JA-Ile), a bioactive phytohormone of the jasmonate-mediated signaling pathway. Converts 12-hydroxy-JA-Ile (12OH-JA-Ile) to the carboxy-derivative 12COOH-JA-Ile. Exerts negative feedback control on JA-Ile levels and plays a role in attenuation of jasmonate responses. Also functions as in-chain fatty acids hydroxylase in vitro. Catalyzes the hydroxylation of 12-hydroxy-jasmonoyl-L-phenylalanine (12OH-JA-Phe) in vitro. Converts 12OH-JA-Phe to the carboxy-derivative 12COOH-JA-Phe. The polypeptide is Cytochrome P450 94C1 (Arabidopsis thaliana (Mouse-ear cress)).